Consider the following 391-residue polypeptide: Phosphoglycerate kinase (391 aa).

Substrate-binding positions include 21-23 (DFN), arginine 41, 64-67 (HLGR), arginine 121, and arginine 154. ATP contacts are provided by residues lysine 205, glutamate 322, and 348–351 (GGDS).

Belongs to the phosphoglycerate kinase family. Monomer.

It is found in the cytoplasm. The catalysed reaction is (2R)-3-phosphoglycerate + ATP = (2R)-3-phospho-glyceroyl phosphate + ADP. It functions in the pathway carbohydrate degradation; glycolysis; pyruvate from D-glyceraldehyde 3-phosphate: step 2/5. The protein is Phosphoglycerate kinase of Solibacter usitatus (strain Ellin6076).